A 124-amino-acid chain; its full sequence is Small ribosomal subunit protein uS12 (124 aa).

Residues 1-32 (MPTIQQLVRKGRKDKATKTKTPALKGSPQRRG) form a disordered region. Asp-89 bears the 3-methylthioaspartic acid mark. The segment at 105–124 (QGVRGRQQARSRYGAKKEKK) is disordered. Residues 111-124 (QQARSRYGAKKEKK) show a composition bias toward basic residues.

The protein belongs to the universal ribosomal protein uS12 family. Part of the 30S ribosomal subunit. Contacts proteins S8 and S17. May interact with IF1 in the 30S initiation complex.

Its function is as follows. With S4 and S5 plays an important role in translational accuracy. Interacts with and stabilizes bases of the 16S rRNA that are involved in tRNA selection in the A site and with the mRNA backbone. Located at the interface of the 30S and 50S subunits, it traverses the body of the 30S subunit contacting proteins on the other side and probably holding the rRNA structure together. The combined cluster of proteins S8, S12 and S17 appears to hold together the shoulder and platform of the 30S subunit. In Beutenbergia cavernae (strain ATCC BAA-8 / DSM 12333 / CCUG 43141 / JCM 11478 / NBRC 16432 / NCIMB 13614 / HKI 0122), this protein is Small ribosomal subunit protein uS12.